A 202-amino-acid polypeptide reads, in one-letter code: MRTFIIKANEAHTRPDFKLNDLPGTSGRIDVLCRFLNSAFLLSHGFRKNVRVWLLLYGPPEPPKAIRFEGSRLKVRLNPDERSTARLIVKALKAGGGLREPGKEVEVYPGLYVSNRTFEDVVRLTLKNSAIYYLHEEGRPITDIRFPQNVAFVLGDHKGLSPEDEAFLDGIAERVSVGRKSYLASHVVAYINIFLDSLPNPP.

Residues Leu134 and Gly155 each contribute to the S-adenosyl-L-methionine site.

The protein belongs to the methyltransferase superfamily. TrmY family. Homodimer.

Its subcellular location is the cytoplasm. The enzyme catalyses pseudouridine(54) in tRNA + S-adenosyl-L-methionine = N(1)-methylpseudouridine(54) in tRNA + S-adenosyl-L-homocysteine + H(+). In terms of biological role, specifically catalyzes the N1-methylation of pseudouridine at position 54 (Psi54) in tRNAs. The chain is tRNA (pseudouridine(54)-N(1))-methyltransferase from Thermococcus gammatolerans (strain DSM 15229 / JCM 11827 / EJ3).